Reading from the N-terminus, the 89-residue chain is Small ribosomal subunit protein uS15 (89 aa).

Belongs to the universal ribosomal protein uS15 family. In terms of assembly, part of the 30S ribosomal subunit. Forms a bridge to the 50S subunit in the 70S ribosome, contacting the 23S rRNA.

Its function is as follows. One of the primary rRNA binding proteins, it binds directly to 16S rRNA where it helps nucleate assembly of the platform of the 30S subunit by binding and bridging several RNA helices of the 16S rRNA. In terms of biological role, forms an intersubunit bridge (bridge B4) with the 23S rRNA of the 50S subunit in the ribosome. This Bacillus licheniformis (strain ATCC 14580 / DSM 13 / JCM 2505 / CCUG 7422 / NBRC 12200 / NCIMB 9375 / NCTC 10341 / NRRL NRS-1264 / Gibson 46) protein is Small ribosomal subunit protein uS15.